We begin with the raw amino-acid sequence, 314 residues long: tRNA dimethylallyltransferase (314 aa).

12–19 (GPTASGKT) provides a ligand contact to ATP. Residue 14-19 (TASGKT) coordinates substrate. Interaction with substrate tRNA regions lie at residues 37 to 40 (DSAL), 161 to 165 (QRINR), 242 to 247 (RCVGYR), and 275 to 282 (KRQITWLR).

This sequence belongs to the IPP transferase family. In terms of assembly, monomer. The cofactor is Mg(2+).

The enzyme catalyses adenosine(37) in tRNA + dimethylallyl diphosphate = N(6)-dimethylallyladenosine(37) in tRNA + diphosphate. Catalyzes the transfer of a dimethylallyl group onto the adenine at position 37 in tRNAs that read codons beginning with uridine, leading to the formation of N6-(dimethylallyl)adenosine (i(6)A). This chain is tRNA dimethylallyltransferase, found in Mannheimia succiniciproducens (strain KCTC 0769BP / MBEL55E).